The primary structure comprises 249 residues: Small ribosomal subunit protein uS2 (249 aa).

It belongs to the universal ribosomal protein uS2 family.

In Chlorobaculum tepidum (strain ATCC 49652 / DSM 12025 / NBRC 103806 / TLS) (Chlorobium tepidum), this protein is Small ribosomal subunit protein uS2.